The sequence spans 203 residues: Ribosomal RNA large subunit methyltransferase E (203 aa).

5 residues coordinate S-adenosyl-L-methionine: glycine 51, tryptophan 53, aspartate 69, aspartate 85, and aspartate 108. Lysine 148 serves as the catalytic Proton acceptor.

Belongs to the class I-like SAM-binding methyltransferase superfamily. RNA methyltransferase RlmE family.

The protein resides in the cytoplasm. It catalyses the reaction uridine(2552) in 23S rRNA + S-adenosyl-L-methionine = 2'-O-methyluridine(2552) in 23S rRNA + S-adenosyl-L-homocysteine + H(+). Its function is as follows. Specifically methylates the uridine in position 2552 of 23S rRNA at the 2'-O position of the ribose in the fully assembled 50S ribosomal subunit. This chain is Ribosomal RNA large subunit methyltransferase E, found in Methanosphaerula palustris (strain ATCC BAA-1556 / DSM 19958 / E1-9c).